The following is a 129-amino-acid chain: UPF0325 protein YPTS_3127 (129 aa).

This sequence belongs to the UPF0325 family.

This is UPF0325 protein YPTS_3127 from Yersinia pseudotuberculosis serotype IB (strain PB1/+).